Here is a 1319-residue protein sequence, read N- to C-terminus: Cellulose synthase operon protein C (1319 aa).

The signal sequence occupies residues 1–46 (MNRRYVLSLSGALLASSCMTVLVAVPVARAQQASTAMTTAATSATA). TPR repeat units follow at residues 49–82 (RQIL…APNS), 84–116 (DVLE…APGS), 291–324 (AGLA…NSHD), 325–358 (ADSL…DPKT), 405–438 (TGAT…EPNN), 557–590 (NDAM…KQDL), 701–734 (MGIS…DPEA), and 736–768 (SPKL…NPQD). Residues 841–855 (RAASGAGAAQEDALA) are compositionally biased toward low complexity. Positions 841–890 (RAASGAGAAQEDALAPPSTNPFRPRGYGHQTELGAPVTGGSYSAEAASPD) are disordered. The stretch at 1059-1094 (RRSITNSVLSYGGLRDTNYNSALGRYARQVYGQALS) is one TPR 9 repeat.

This sequence belongs to the AcsC/BcsC family.

It is found in the cell outer membrane. Its pathway is glycan metabolism; bacterial cellulose biosynthesis. Functionally, required for maximal bacterial cellulose synthesis. It may be involved in the formation of a membrane complex for extrusion of the cellulose product. This chain is Cellulose synthase operon protein C (bcsC), found in Komagataeibacter xylinus (Gluconacetobacter xylinus).